We begin with the raw amino-acid sequence, 498 residues long: GTPase Der (498 aa).

EngA-type G domains follow at residues 3 to 167 (PVVA…FDDL) and 210 to 383 (IKLA…KSAT). GTP contacts are provided by residues 9–16 (GRPNVGKS), 57–61 (DTGGI), 119–122 (NKID), 216–223 (GRPNVGKS), 263–267 (DTAGV), and 328–331 (NKWD). Residues 384 to 468 (TRVGTSVLTR…PIRINFQNSE (85 aa)) enclose the KH-like domain.

Belongs to the TRAFAC class TrmE-Era-EngA-EngB-Septin-like GTPase superfamily. EngA (Der) GTPase family. In terms of assembly, associates with the 50S ribosomal subunit.

Its function is as follows. GTPase that plays an essential role in the late steps of ribosome biogenesis. The chain is GTPase Der from Vibrio parahaemolyticus serotype O3:K6 (strain RIMD 2210633).